A 431-amino-acid polypeptide reads, in one-letter code: Serine--tRNA ligase (431 aa).

237–239 contacts L-serine; that stretch reads TAE. 268–270 is an ATP binding site; the sequence is RSE. Glu-291 lines the L-serine pocket. 355–358 serves as a coordination point for ATP; the sequence is EISS. Ser-390 is a binding site for L-serine.

It belongs to the class-II aminoacyl-tRNA synthetase family. Type-1 seryl-tRNA synthetase subfamily. Homodimer. The tRNA molecule binds across the dimer.

The protein localises to the cytoplasm. The catalysed reaction is tRNA(Ser) + L-serine + ATP = L-seryl-tRNA(Ser) + AMP + diphosphate + H(+). The enzyme catalyses tRNA(Sec) + L-serine + ATP = L-seryl-tRNA(Sec) + AMP + diphosphate + H(+). The protein operates within aminoacyl-tRNA biosynthesis; selenocysteinyl-tRNA(Sec) biosynthesis; L-seryl-tRNA(Sec) from L-serine and tRNA(Sec): step 1/1. In terms of biological role, catalyzes the attachment of serine to tRNA(Ser). Is also able to aminoacylate tRNA(Sec) with serine, to form the misacylated tRNA L-seryl-tRNA(Sec), which will be further converted into selenocysteinyl-tRNA(Sec). This is Serine--tRNA ligase from Neisseria meningitidis serogroup C (strain 053442).